Reading from the N-terminus, the 169-residue chain is Large ribosomal subunit protein uL10 (169 aa).

It belongs to the universal ribosomal protein uL10 family. As to quaternary structure, part of the ribosomal stalk of the 50S ribosomal subunit. The N-terminus interacts with L11 and the large rRNA to form the base of the stalk. The C-terminus forms an elongated spine to which L12 dimers bind in a sequential fashion forming a multimeric L10(L12)X complex.

Its function is as follows. Forms part of the ribosomal stalk, playing a central role in the interaction of the ribosome with GTP-bound translation factors. This Orientia tsutsugamushi (strain Ikeda) (Rickettsia tsutsugamushi) protein is Large ribosomal subunit protein uL10.